We begin with the raw amino-acid sequence, 754 residues long: Disintegrin and metalloproteinase domain-containing protein 7 (754 aa).

The signal sequence occupies residues 1–18 (MLPGCIFLMILLIPQVKE). The propeptide occupies 19–176 (KFILGVEGQQ…NYSCTELNFT (158 aa)). At 19-668 (KFILGVEGQQ…ACEETLHVTN (650 aa)) the chain is on the extracellular side. N-linked (GlcNAc...) asparagine glycosylation is found at Asn-84, Asn-167, Asn-174, and Asn-184. One can recognise a Peptidase M12B domain in the interval 199-394 (KYVELFIVAD…YKPTCMLNIP (196 aa)). 4 disulfide bridges follow: Cys-310–Cys-389, Cys-350–Cys-373, Cys-352–Cys-357, and Cys-460–Cys-480. One can recognise a Disintegrin domain in the interval 402–488 (FQFCGNKKLD…ACPKDQFRVN (87 aa)). 2 N-linked (GlcNAc...) asparagine glycosylation sites follow: Asn-584 and Asn-668. Residues 669–689 (ITILVVVLVLVIVGIGVLILL) form a helical membrane-spanning segment. The Cytoplasmic segment spans residues 690–754 (VRYRKCIKLK…GIADPNQSAK (65 aa)).

Interacts with ITM2B in sperm; the interaction increases following capacitation. Interacts with HSPA5 and CANX.

The protein localises to the membrane. Its function is as follows. Required for normal male fertility via maintenance of epithelial cell morphology in the caput epididymis and subsequently correct epididymis lumen structure required for sperm development. Plays a role in sperm motility, flagella morphology and tyrosine phosphorylation during sperm capacitance. Plays a role in normal expression levels of HSPA5, ITM2B and ADAM2 in sperm both prior to and post-capacitation. This is a non catalytic metalloprotease-like protein. In Homo sapiens (Human), this protein is Disintegrin and metalloproteinase domain-containing protein 7.